Reading from the N-terminus, the 311-residue chain is Cytosolic Fe-S cluster assembly factor Nubp1 homolog (311 aa).

Positions 1-21 (MQAPPPEHCPGVESEEAGKGS) are disordered. [4Fe-4S] cluster contacts are provided by cysteine 9, cysteine 23, cysteine 26, and cysteine 32. 63 to 70 (GKGGVGKS) serves as a coordination point for ATP. Residues cysteine 240 and cysteine 243 each coordinate [4Fe-4S] cluster.

It belongs to the Mrp/NBP35 ATP-binding proteins family. NUBP1/NBP35 subfamily. Heterotetramer of 2 Nubp1 and 2 Nubp2 chains. It depends on [4Fe-4S] cluster as a cofactor.

The protein resides in the cytoplasm. In terms of biological role, component of the cytosolic iron-sulfur (Fe/S) protein assembly (CIA) machinery. Required for maturation of extramitochondrial Fe-S proteins. The Nubp1-Nubp2 heterotetramer forms a Fe-S scaffold complex, mediating the de novo assembly of an Fe-S cluster and its transfer to target apoproteins. The sequence is that of Cytosolic Fe-S cluster assembly factor Nubp1 homolog from Drosophila melanogaster (Fruit fly).